A 267-amino-acid polypeptide reads, in one-letter code: NADP-dependent mannitol dehydrogenase (267 aa).

Residues N108 and K141 each contribute to the NADP(+) site. S160 serves as the catalytic Proton donor. NADP(+) contacts are provided by Y175, K179, I207, and T209. Y175 acts as the Proton acceptor in catalysis. The active-site Lowers pKa of active site Tyr is the K179.

The protein belongs to the short-chain dehydrogenases/reductases (SDR) family. In terms of assembly, exists as monomer, dimer and tetramer.

The enzyme catalyses D-mannitol + NADP(+) = D-fructose + NADPH + H(+). In terms of biological role, interconverts D-mannitol and D-fructose. Not active with fructose 6-phosphate or NADH. This is NADP-dependent mannitol dehydrogenase from Davidiella tassiana (Mycosphaerella tassiana).